The following is a 1436-amino-acid chain: Probable deoxyribonuclease RhsB (1436 aa).

The segment at 16–42 is disordered; it reads HAGNRPNPPADRPQPCQGKPPTSPGKT. 2 helical membrane-spanning segments follow: residues 48–68 and 70–90; these read FLGALAGAVAGALVAAAVAAA and VFLVGVTGGLAVAAVGALAVF. YD repeat units lie at residues 486–521, 569–605, 612–647, 766–799, and 847–879; these read YNTAHRLTRWHDNDQTWARYEYDAQGRCVYTTCADG, YDEVGNLLREISPAGRVVEFTYLDDTGRVSTFTDGSG, YDDAQRLCGVTDPLGREWGWVYDAEGNPERLTGPDA, DLLTARTDAEGRTWRYEYDRESQQLIAVTAPDGS, and YDARGLLLRETAPDDTLHYRYDAAGRLTEVSSA.

Belongs to the RHS/WapA nuclease family.

The protein localises to the membrane. Toxic component of a toxin-immunity protein module, which functions as a cellular contact-dependent growth inhibition (CDI) system. This protein may be a nuclease that is specifically inhibited by its cognate immunity protein RhsBI. Upon expression of the C-terminus (residues 1284-1436) in E.coli growth is inhibited, cells elongate, nucleoids condense and plasmid DNA is degraded; these effects are blocked specifically by cognate immunity protein RshIB. Cell contact is necessary for growth inhibition. This is Probable deoxyribonuclease RhsB (rhsB) from Dickeya dadantii (strain 3937) (Erwinia chrysanthemi (strain 3937)).